The chain runs to 475 residues: MAFASEDIAYHSSNAVYRVPSNRHEADQEALLGKPLDYPAPGLQRPEDRFNGAYIIFFCLGIGGLLPWNFFVTAKEYWAFKLRNCSSPASGKDPEDADILNYFESYLAVASTVPSLLFLVANFLLVNRIRVHVRVLASLSVSLAIFVVMAVLVRVDTSSWTRGFFSIAMACMAIISSSSTIFNSSVYGLTGSFPMRNAQALISGGAMGGTVSAVASLVDLAASSDVRDSALAFFLTAAVFLGLCVGLYLLLPQLEYARYYMRPVVPIHVFSSEDSPPRDAPSTSSVAPASRAVHTPPLGPILKKTAGLGFCAVFLYFITALIFPAISTNIQPMHKGTGSPWTSKFYVPLTVFLLFNFADLCGRQVTAWIQVPGPRSKLLPILAVSRVCLVPLFLLCNYQPRSHLTLVLFQSDIYPILFTCLLGLSNGYLSTLVLMYGPKIVPRELAEATSVVMLFYMSLGLMLGSACAALLEHFI.

Residues 1–51 are Cytoplasmic-facing; the sequence is MAFASEDIAYHSSNAVYRVPSNRHEADQEALLGKPLDYPAPGLQRPEDRFN. Serine 21 is modified (phosphoserine). Residues 31-32 carry the Dileucine internalization motif motif; sequence LL. Residues 52-72 form a helical membrane-spanning segment; that stretch reads GAYIIFFCLGIGGLLPWNFFV. Residues 73–105 lie on the Extracellular side of the membrane; the sequence is TAKEYWAFKLRNCSSPASGKDPEDADILNYFES. An N-linked (GlcNAc...) asparagine glycan is attached at asparagine 84. The helical transmembrane segment at 106 to 126 threads the bilayer; it reads YLAVASTVPSLLFLVANFLLV. At 127-132 the chain is on the cytoplasmic side; it reads NRIRVH. Residues 133–153 form a helical membrane-spanning segment; that stretch reads VRVLASLSVSLAIFVVMAVLV. The Extracellular segment spans residues 154–162; it reads RVDTSSWTR. A helical transmembrane segment spans residues 163 to 183; it reads GFFSIAMACMAIISSSSTIFN. Over 184-199 the chain is Cytoplasmic; that stretch reads SSVYGLTGSFPMRNAQ. Residues 200–220 form a helical membrane-spanning segment; it reads ALISGGAMGGTVSAVASLVDL. Residues 221–230 lie on the Extracellular side of the membrane; the sequence is AASSDVRDSA. The chain crosses the membrane as a helical span at residues 231–251; it reads LAFFLTAAVFLGLCVGLYLLL. Residues 252 to 305 are Cytoplasmic-facing; it reads PQLEYARYYMRPVVPIHVFSSEDSPPRDAPSTSSVAPASRAVHTPPLGPILKKT. Residues 272-291 form a disordered region; sequence SEDSPPRDAPSTSSVAPASR. The helical transmembrane segment at 306 to 326 threads the bilayer; it reads AGLGFCAVFLYFITALIFPAI. Topologically, residues 327 to 340 are extracellular; sequence STNIQPMHKGTGSP. The chain crosses the membrane as a helical span at residues 341–361; sequence WTSKFYVPLTVFLLFNFADLC. The Cytoplasmic segment spans residues 362–377; it reads GRQVTAWIQVPGPRSK. The chain crosses the membrane as a helical span at residues 378–398; that stretch reads LLPILAVSRVCLVPLFLLCNY. The Extracellular portion of the chain corresponds to 399–414; that stretch reads QPRSHLTLVLFQSDIY. A helical membrane pass occupies residues 415-437; sequence PILFTCLLGLSNGYLSTLVLMYG. The Cytoplasmic portion of the chain corresponds to 438-450; it reads PKIVPRELAEATS. A helical membrane pass occupies residues 451–471; that stretch reads VVMLFYMSLGLMLGSACAALL. Residues 472–475 are Extracellular-facing; that stretch reads EHFI.

It belongs to the SLC29A/ENT transporter (TC 2.A.57) family. In terms of tissue distribution, widely expressed. Highest levels in heart and liver (at protein level).

The protein resides in the lysosome membrane. It is found in the late endosome membrane. Its subcellular location is the mitochondrion membrane. It localises to the cell membrane. It catalyses the reaction adenosine(in) = adenosine(out). The catalysed reaction is guanosine(in) = guanosine(out). It carries out the reaction inosine(in) = inosine(out). The enzyme catalyses uridine(out) = uridine(in). It catalyses the reaction cytidine(in) = cytidine(out). The catalysed reaction is thymidine(in) = thymidine(out). It carries out the reaction 2'-deoxyadenosine(in) = 2'-deoxyadenosine(out). The enzyme catalyses 2'-deoxycytidine(in) = 2'-deoxycytidine(out). It catalyses the reaction guanine(out) = guanine(in). The catalysed reaction is uracil(in) = uracil(out). It carries out the reaction (R)-noradrenaline(out) = (R)-noradrenaline(in). The enzyme catalyses dopamine(out) = dopamine(in). It catalyses the reaction serotonin(out) = serotonin(in). The catalysed reaction is tyramine(in) = tyramine(out). It carries out the reaction ATP(in) = ATP(out). Functionally, uniporter that mediates the facilitative transport of nucleoside across lysosomal and mitochondrial membranes. Functions as a non-electrogenic Na(+)-independent transporter. Substrate transport is pH-dependent and enhanced under acidic condition, probably reflecting the location of the transporter in acidic intracellular compartments. Proton is not a cotransporting ion but most likely change the ionization state of the transporter which dictates transport-permissible/impermissible conformation for nucleoside translocation. May direct the nucleoside transport from lysosomes to cytosol or cytosol to mitochondria to facilitate the fundamental function of salvage synthesis of nucleic acids. Involved in the transport of nucleosides (adenosine, guanosine, uridine, thymidine, cytidine and inosine) and deoxynucleosides (deoxyadenosine, deoxycytidine). Also mediates transport of purine nucleobases (adenine, guanine) and pyrimidine nucleobases (uracil). Also able to transport monoamine neurotransmitters dopamine, serotonin, noradrenaline and tyramine. Capable of transporting ATP. Mediates nucleoside export from lysosomes in macrophages, which regulates macrophage functions and numbers. The polypeptide is Equilibrative nucleoside transporter 3 (Rattus norvegicus (Rat)).